Consider the following 185-residue polypeptide: Elongation factor P (185 aa).

This sequence belongs to the elongation factor P family.

Its subcellular location is the cytoplasm. Its pathway is protein biosynthesis; polypeptide chain elongation. Its function is as follows. Involved in peptide bond synthesis. Stimulates efficient translation and peptide-bond synthesis on native or reconstituted 70S ribosomes in vitro. Probably functions indirectly by altering the affinity of the ribosome for aminoacyl-tRNA, thus increasing their reactivity as acceptors for peptidyl transferase. The chain is Elongation factor P from Thermosipho africanus (strain TCF52B).